The sequence spans 547 residues: MIQVASKILVTCALPYANGSLHLGHMLEHIQADIWVRYQRIRGKQVYFICADDAHGTPIMLKAKQSGITPEAMINKINQEHQTDLAQFEISYDNYYSTHSDENRELVISIYNTLKENGLIKKRMISQLYDPIHNIFLPDRFVKGYCPRCKLPDQYGDNCEICGATYHPTDLIDPKSTLSGVTPVISKSKHLFFDLPVFSEVLRAWTRSGALQEQVANKMQEWFDMGLQQWDISRDAPYFGFEVPDTPGKYFYVWLDAPIGYIGAFKNLCNKRNDIIFDEFWHLSSKADLYHFIGKDITYFHGIFWPAILEGSKLRKPTNLFVHGYVTINGAKMSKSRGTLIKASTYLAHLDASYLRYYYATKLSSDINDIDLNFNDFVNRVNADIINKVINLAARNASFIQKYFDNKLSATIEDQYLYDYFVTASVSIGEAFNNRETSRAIREIMILADRANVYIHKKEPWVVAKNKYYQQDLHNICSMGINLFRLLMTYLQPVLPNLAIQAEAFLNTKLNWDSMVIPLTNHKISPFKTLLQRITLSQVKAMIDATH.

The 'HIGH' region signature appears at 15–25 (PYANGSLHLGH). Residues C146, C149, C159, and C162 each contribute to the Zn(2+) site. A 'KMSKS' region motif is present at residues 332–336 (KMSKS). K335 contacts ATP.

The protein belongs to the class-I aminoacyl-tRNA synthetase family. MetG type 1 subfamily. Monomer. It depends on Zn(2+) as a cofactor.

The protein localises to the cytoplasm. It carries out the reaction tRNA(Met) + L-methionine + ATP = L-methionyl-tRNA(Met) + AMP + diphosphate. Is required not only for elongation of protein synthesis but also for the initiation of all mRNA translation through initiator tRNA(fMet) aminoacylation. The chain is Methionine--tRNA ligase from Baumannia cicadellinicola subsp. Homalodisca coagulata.